We begin with the raw amino-acid sequence, 377 residues long: Probable dehydratase NIT22 (377 aa).

2 residues coordinate NADP(+): Lys101 and Arg196. Positions 220 to 243 (ERGPKMNEHVPSTPPRRPDAVSSF) are disordered. One can recognise a MaoC-like domain in the interval 233–332 (PPRRPDAVSS…ILMWDMGLCK (100 aa)). NADP(+)-binding residues include Thr265 and Ile287.

This sequence belongs to the short-chain dehydrogenases/reductases (SDR) family.

The protein operates within siderophore biosynthesis. Probable dehydratase; part of the gene cluster that mediates the biosynthesis of hydroxamate-containing siderophores that play a critical role in virulence via intracellular iron acquisition during macrophage infection. This chain is Probable dehydratase NIT22, found in Ajellomyces capsulatus (Darling's disease fungus).